The sequence spans 154 residues: Protein X (154 aa).

Positions 68-117 (PCALRFTSARRMETTVNAHRNLPKVLHKRTLGLSVMSTTDLEAYFKDCVF) are mitochondrial targeting sequence.

Belongs to the orthohepadnavirus protein X family. As to quaternary structure, may form homodimer. May interact with host CEBPA, CFLAR, CREB1, DDB1, E4F1, HBXIP, HSPD1/HSP60, NFKBIA, POLR2E and SMAD4. Interacts with host SMC5-SMC6 complex and induces its degradation. Interacts with host TRPC4AP; leading to prevent ubiquitination of TRPC4AP. Interacts with host PLSCR1; this interaction promotes ubiquitination and degradation of HBx and impairs HBx-mediated cell proliferation. Post-translationally, a fraction may be phosphorylated in insect cells and HepG2 cells, a human hepatoblastoma cell line. Phosphorylated in vitro by host protein kinase C or mitogen-activated protein kinase. N-acetylated in insect cells.

Its subcellular location is the host cytoplasm. It localises to the host nucleus. It is found in the host mitochondrion. Its function is as follows. Multifunctional protein that plays a role in silencing host antiviral defenses and promoting viral transcription. Does not seem to be essential for HBV infection. May be directly involved in development of cirrhosis and liver cancer (hepatocellular carcinoma). Most of cytosolic activities involve modulation of cytosolic calcium. The effect on apoptosis is controversial depending on the cell types in which the studies have been conducted. May induce apoptosis by localizing in mitochondria and causing loss of mitochondrial membrane potential. May also modulate apoptosis by binding host CFLAR, a key regulator of the death-inducing signaling complex (DISC). Promotes viral transcription by using the host E3 ubiquitin ligase DDB1 to target the SMC5-SMC6 complex to proteasomal degradation. This host complex would otherwise bind to viral episomal DNA, and prevents its transcription. Moderately stimulates transcription of many different viral and cellular transcription elements. Promoters and enhancers stimulated by HBx contain DNA binding sites for NF-kappa-B, AP-1, AP-2, c-EBP, ATF/CREB, or the calcium-activated factor NF-AT. This chain is Protein X, found in Hepatitis B virus genotype B1 (isolate Japan/Yamagata-2/1998) (HBV-B).